The following is a 436-amino-acid chain: Enolase (436 aa).

Gln-167 serves as a coordination point for (2R)-2-phosphoglycerate. Glu-209 acts as the Proton donor in catalysis. Asp-246, Glu-291, and Asp-318 together coordinate Mg(2+). Lys-343, Arg-372, Ser-373, and Lys-394 together coordinate (2R)-2-phosphoglycerate. Lys-343 acts as the Proton acceptor in catalysis.

Belongs to the enolase family. In terms of assembly, component of the RNA degradosome, a multiprotein complex involved in RNA processing and mRNA degradation. It depends on Mg(2+) as a cofactor.

The protein resides in the cytoplasm. It is found in the secreted. Its subcellular location is the cell surface. It catalyses the reaction (2R)-2-phosphoglycerate = phosphoenolpyruvate + H2O. Its pathway is carbohydrate degradation; glycolysis; pyruvate from D-glyceraldehyde 3-phosphate: step 4/5. In terms of biological role, catalyzes the reversible conversion of 2-phosphoglycerate (2-PG) into phosphoenolpyruvate (PEP). It is essential for the degradation of carbohydrates via glycolysis. In Actinobacillus pleuropneumoniae serotype 5b (strain L20), this protein is Enolase.